Here is a 420-residue protein sequence, read N- to C-terminus: ATP-dependent Clp protease ATP-binding subunit ClpX (420 aa).

One can recognise a ClpX-type ZB domain in the interval Lys-3–His-57. Residues Cys-16, Cys-19, Cys-38, and Cys-41 each contribute to the Zn(2+) site. Pro-122–Leu-129 is an ATP binding site.

It belongs to the ClpX chaperone family. As to quaternary structure, component of the ClpX-ClpP complex. Forms a hexameric ring that, in the presence of ATP, binds to fourteen ClpP subunits assembled into a disk-like structure with a central cavity, resembling the structure of eukaryotic proteasomes.

Functionally, ATP-dependent specificity component of the Clp protease. It directs the protease to specific substrates. Can perform chaperone functions in the absence of ClpP. This is ATP-dependent Clp protease ATP-binding subunit ClpX from Leptospira borgpetersenii serovar Hardjo-bovis (strain L550).